The sequence spans 549 residues: Probable protein kinase UbiB (549 aa).

A Protein kinase domain is found at 123–504 (DFDETALASA…QRNNTGFSRL (382 aa)). Residues 129–137 (LASASIAQV) and K156 contribute to the ATP site. D291 serves as the catalytic Proton acceptor. The helical transmembrane segment at 505 to 525 (MILGIAIAGTFWKFEMLPLWV) threads the bilayer.

The protein belongs to the ABC1 family. UbiB subfamily.

The protein resides in the cell inner membrane. Its pathway is cofactor biosynthesis; ubiquinone biosynthesis [regulation]. Is probably a protein kinase regulator of UbiI activity which is involved in aerobic coenzyme Q (ubiquinone) biosynthesis. The chain is Probable protein kinase UbiB from Glaesserella parasuis serovar 5 (strain SH0165) (Haemophilus parasuis).